Here is a 166-residue protein sequence, read N- to C-terminus: uncharacterized protein (166 aa).

A helical transmembrane segment spans residues 34–54 (FWGKVLVLTFGIICVVFVIFM). Disordered regions lie at residues 73–93 (QRTQ…SQQF) and 123–166 (TSTP…NDEV).

Its subcellular location is the vacuole membrane. This is an uncharacterized protein from Schizosaccharomyces pombe (strain 972 / ATCC 24843) (Fission yeast).